We begin with the raw amino-acid sequence, 363 residues long: MAELNKTKVRKELRTERPSIYSFELDEIKQWLTDNGEKPFRAAQIFEWLYEKRVSSFEDMTNLSKDLREKLNTRFVLTTLKTAVKQTSQDGTMKFLFELHDGYTIETVLMRHEYGNSVCVTTQVGCRIGCTFCASTLGGLKRNLEAGEIVAQVVKVQKALDETDERVSSVVIMGIGEPFDNFNEMLAFLKIINHDKGLNIGARHITVSTSGIIPKIYEFADQQMQINFAISLHAPNTEIRSRLMPINRAYKLPDLMEAVKYYINKTGRRISFEYGLFGGVNDQVEHAEELADLLEGVKCHVNLIPVNYVPERDYVRTPRDQIFAFEKTLKSRGVNVTIRREQGHDIDAACGQLRAKERQDETR.

Glu106 acts as the Proton acceptor in catalysis. One can recognise a Radical SAM core domain in the interval 112–345; sequence HEYGNSVCVT…VTIRREQGHD (234 aa). Cys119 and Cys350 form a disulfide bridge. [4Fe-4S] cluster is bound by residues Cys126, Cys130, and Cys133. S-adenosyl-L-methionine-binding positions include 176 to 177, Ser208, 231 to 233, and Asn307; these read GE and SLH. Catalysis depends on Cys350, which acts as the S-methylcysteine intermediate.

The protein belongs to the radical SAM superfamily. RlmN family. [4Fe-4S] cluster is required as a cofactor.

The protein localises to the cytoplasm. The catalysed reaction is adenosine(2503) in 23S rRNA + 2 reduced [2Fe-2S]-[ferredoxin] + 2 S-adenosyl-L-methionine = 2-methyladenosine(2503) in 23S rRNA + 5'-deoxyadenosine + L-methionine + 2 oxidized [2Fe-2S]-[ferredoxin] + S-adenosyl-L-homocysteine. It carries out the reaction adenosine(37) in tRNA + 2 reduced [2Fe-2S]-[ferredoxin] + 2 S-adenosyl-L-methionine = 2-methyladenosine(37) in tRNA + 5'-deoxyadenosine + L-methionine + 2 oxidized [2Fe-2S]-[ferredoxin] + S-adenosyl-L-homocysteine. Functionally, specifically methylates position 2 of adenine 2503 in 23S rRNA and position 2 of adenine 37 in tRNAs. In Bacillus subtilis (strain 168), this protein is Probable dual-specificity RNA methyltransferase RlmN.